A 117-amino-acid chain; its full sequence is Ribosome-binding factor A (117 aa).

Belongs to the RbfA family. In terms of assembly, monomer. Binds 30S ribosomal subunits, but not 50S ribosomal subunits or 70S ribosomes.

The protein resides in the cytoplasm. Functionally, one of several proteins that assist in the late maturation steps of the functional core of the 30S ribosomal subunit. Associates with free 30S ribosomal subunits (but not with 30S subunits that are part of 70S ribosomes or polysomes). Required for efficient processing of 16S rRNA. May interact with the 5'-terminal helix region of 16S rRNA. This chain is Ribosome-binding factor A, found in Blochmanniella floridana.